Here is a 453-residue protein sequence, read N- to C-terminus: Autophagy-related protein 21 (453 aa).

One copy of the WD 1 repeat lies at 4-137 (LRFNQDASCC…NDQIFIYDIS (134 aa)). Residues 177–207 (GNELDRIRSKSNNNNDQTNSDNGRSRTYSIN) form a disordered region. The segment covering 187–198 (SNNNNDQTNSDN) has biased composition (low complexity). WD repeat units follow at residues 252 to 347 (NLKP…RTDD) and 419 to 453 (FDNKIYVASDDGSFKTYTIPSKHGQCVLNKTSHFI). Residues 310 to 314 (FRRGS) carry the L/FRRG motif motif.

This sequence belongs to the WD repeat PROPPIN family.

The protein resides in the cytoplasm. The protein localises to the membrane. It localises to the vacuole membrane. In terms of biological role, required for cytoplasm to vacuole transport (Cvt) vesicles formation and mitophagy. Involved in binding of phosphatidylethanolamine to ATG8 and in recruitment of ATG8 and ATG5 to the pre-autophagosomal structure. Protects ATG8 from ARG4-mediated cleavage. The chain is Autophagy-related protein 21 (ATG21) from Candida glabrata (strain ATCC 2001 / BCRC 20586 / JCM 3761 / NBRC 0622 / NRRL Y-65 / CBS 138) (Yeast).